Here is a 223-residue protein sequence, read N- to C-terminus: Small ribosomal subunit protein uS3 (223 aa).

The region spanning 39–117 (IREHLRKKPS…RPELNAKLVA (79 aa)) is the KH type-2 domain.

Belongs to the universal ribosomal protein uS3 family. As to quaternary structure, part of the 30S ribosomal subunit. Forms a tight complex with proteins S10 and S14.

Functionally, binds the lower part of the 30S subunit head. Binds mRNA in the 70S ribosome, positioning it for translation. This Chlamydia felis (strain Fe/C-56) (Chlamydophila felis) protein is Small ribosomal subunit protein uS3.